We begin with the raw amino-acid sequence, 224 residues long: 7-cyano-7-deazaguanine synthase (224 aa).

9–19 (LSGGLDSATAL) serves as a coordination point for ATP. The Zn(2+) site is built by Cys188, Cys198, Cys201, and Cys204.

It belongs to the QueC family. The cofactor is Zn(2+).

It carries out the reaction 7-carboxy-7-deazaguanine + NH4(+) + ATP = 7-cyano-7-deazaguanine + ADP + phosphate + H2O + H(+). It participates in purine metabolism; 7-cyano-7-deazaguanine biosynthesis. In terms of biological role, catalyzes the ATP-dependent conversion of 7-carboxy-7-deazaguanine (CDG) to 7-cyano-7-deazaguanine (preQ(0)). The sequence is that of 7-cyano-7-deazaguanine synthase from Thiobacillus denitrificans (strain ATCC 25259 / T1).